The primary structure comprises 316 residues: Ornithine carbamoyltransferase (316 aa).

Residues 59–62, Gln86, Arg110, and 137–140 each bind carbamoyl phosphate; these read STRT and HPCQ. L-ornithine contacts are provided by residues Asn168, Asp232, and 236-237; that span reads SM. Residues 273-274 and Arg301 contribute to the carbamoyl phosphate site; that span reads CL.

Belongs to the aspartate/ornithine carbamoyltransferase superfamily. OTCase family.

It is found in the cytoplasm. It carries out the reaction carbamoyl phosphate + L-ornithine = L-citrulline + phosphate + H(+). It functions in the pathway amino-acid biosynthesis; L-arginine biosynthesis; L-arginine from L-ornithine and carbamoyl phosphate: step 1/3. Functionally, reversibly catalyzes the transfer of the carbamoyl group from carbamoyl phosphate (CP) to the N(epsilon) atom of ornithine (ORN) to produce L-citrulline. The sequence is that of Ornithine carbamoyltransferase (argF) from Listeria monocytogenes serovar 1/2a (strain ATCC BAA-679 / EGD-e).